Reading from the N-terminus, the 373-residue chain is Flagellar P-ring protein (373 aa).

Residues 1–26 form the signal peptide; sequence MRLLFRFLTLVAVLAMSLADVAPAWA.

It belongs to the FlgI family. As to quaternary structure, the basal body constitutes a major portion of the flagellar organelle and consists of four rings (L,P,S, and M) mounted on a central rod.

It is found in the periplasm. It localises to the bacterial flagellum basal body. In terms of biological role, assembles around the rod to form the L-ring and probably protects the motor/basal body from shearing forces during rotation. This chain is Flagellar P-ring protein, found in Rhizobium etli (strain CIAT 652).